The primary structure comprises 2570 residues: MSPLIHDDQPYSWNAAMPIAVVGIGFRGPGDATNVENLFRMIAEGRESRIDIPKEKWNHEAFYHPDPSRFGTHNVTGGHYFQQDVSRFDAPFFNMTAAEAAALDPQQRMLLECTYEAMENSGTKMHDFVGSNTSVFVGSFCADYADVLWRDPETVPMYQCTNAGHSRANTANRVSYIYDLKGPSVTVDTACSASLVALHLGCQSLRTGDAKQALVAGCSAILSHEGMVTMSMMRLLSPEGRCYTFDERAGGYARGDGVGAILLKPLQDALDAGDTIRAVIRGTGSNQDGKTPGITMPSGTAQEALVRSVYEKIGLDPLDTSYVECHGTGTQAGDVTETSALARVFEPGRPKDEPLVIGSVKTNIGHLEGASGVAGVIKTILMLENGLILPNRNFQKGNPKILFDEWKLRVPLGVENWEISKPRRASVNSFGYGGANAHVVLENAQDYLRNHNWEFRSHTRKSATESSGTSTPSNPGPHGRLFVFSSFDEATGKKYLQSFEKYIEDRLQIADSEEFLDDLAYTLGERRTNHTWRTAVPAQSAEELLSNLREGINLGNASQTKNRKIGFVFTGQGAQWCGMGKELIDQYPVFKETIEKAGIACQKAGATFDLETELRKDPKESAINRAIYSQPLSTAVQLGLIDLLASWGVKPTSVTGHSSGEIASAYAAGALSLEDAMLVSYSRGVVSSKMAERATVPGCMMAIGMSKEEVLPIVSTLTKGKVVVACSNSPSSVTASGDLPAIDELHTVLDEKGVFNRKLVVEVAYHSHHMELVKEEYRNAISSIKVQPGNDVEFFSSVTGERASISGLGPDYWVSNMIGEVKFNDSLGRLCLETEGPSATTKKSAQRRKAKVSPVSTLIEIGPHSALAGPIKQIIQANETLNKASIKYYSALVRNKNAATTVLNLVGQLFVAGHEPSLEKVNRPTGLESHSVLIDLPPYAWNHANSYWAESRISKFYRERRFPRTDLLGVLERNSSSIEPRWRNHIRLSEIPWVRDHKIQGNIVYPAAGYLAMAIEAACQHAITVKSIPTITGYKLREVVIDSALIIPENPGEVEVAITLKSFTDSIRNPSDMWDEFVISSVNADSRWTEHCRGLVSVVAPQKVVNVIDGQAQSIAEKQGYAELVASYETKCRRNINVPQFYEQLIELGLEYGPTFANLKRAKAAPNACIGDLEIPDTAAVMPYNFQFPFVIHPATLDALFHTIFAALATANGGTLKDPAVPVSASEIFVSANITSKPGDKLATYTSTEQKDYRFMSASMTVFHESQKQQGAFEPVIEIKDLTCATLAREGADPSTDGQVTKAYNLAWKPSIDLLSQSEILELCAKTSSPEGNTNATNARELLERAAYYMLKRAVAGYAPPETNSAYAQQLWSFLKSQSRVASWKHAYDGWDQLFKADVDAFIDKVVSSSSVGKFLVEVGDKLPNLVKGENSSAEFIKELDLKVFVDNTQLFQNTQSAARYFDLLQHKTPSLSVLAVGPGSGVASLGFLALLNKKSSAPFERYEHNDVEFDIRDVVKEKFPQWAQLIGTKQVDISREIQGQEDIEPNSYDVLVAFHVLGDATGMNNVLAQSKQLLKPDGKVLFIGRPLKSLVASVLFGYVPSVLAETGSTSDRSNLSPAEIDDMVSASGYSKVTAIATSINSNNYSMMVVSASASQDTSAKPQKVHVIAEDESTSQPSLLAGLKEEGIEVTVSSLSEASPTPDHMCIVLSDLSNKTVLSDPSVQEWEALKKIMLEAKGVLWVTRGSAVTTSNPNGSMATGLSRTIRSERGDVPVVTLDLDAERTLDDAVSTDIILKVFRKSFYPAFTASEVEQEYAERKGRLLVPRLIEDEELTKTLAIATEGAKGQLEPLHQPGRPLRMFVGTPGLLDSIFWTDDDRVETPLPDDWVEMEVKASGFNFKDVMMAMGQIKVENLGWECSGILTKVGPAVTGLAVGDRVVCHASGTFCTNARVHVDNVRKIPDTMSFEIAASLPVTYVTAYHSIYNIARLQKGETILVHAATGGLGQAIIELCQLIGAEIFATVGTLDKKKFLIDHFHIPEDHIFFSRDQSFAAGIKRMTRGKGVDAVMNSLAGEGLRLSWECIAPYGRFVELGQRDIGINSRLEMGQFIKNTSFTAFNLAYMVQYNPKVANEVFTSVLNLFWKDAIKGPSPVEVYSFSDVEKAFRRMQTGGHMGKLVGTADTDAMVKVIPLDRSKSLLRSDASYVLIGGLGGIGRATALWMVEHGARNVIFVNRSGVKVDEARETIRVLEEMECKTAIFPCDITNENQVETFVGDAAKAMPPIKGVIQGAMLLRDTLFEKMSLEDYITVLRPKVQGTFNLHKYLPKDMDFFIMESSVSGIVGNASQAAYAAGNTFLDAFASYRVSQGLPATTIDLGAISGVGYLSTNSELKQAMERQGFEFTNPKRLMALIESAIRNPARPGQQAHIITGLGTWNEDSSLGALTLPMFSHFRHLSAGNADWGKSGSGNNLKSALKAAKTLDDASELILGALIDKIASRSGIGPENINTSKSMPDYGIDSLVAVEMRNWITKDMDSTLPVLELLASDPLTHLATKIAQRSRSVQVAEQTHE.

Positions 16-443 constitute a Ketosynthase family 3 (KS3) domain; it reads AMPIAVVGIG…GANAHVVLEN (428 aa). Catalysis depends on for beta-ketoacyl synthase activity residues Cys191, His326, and His366. Residues 458–478 form a disordered region; sequence HTRKSATESSGTSTPSNPGPH. Low complexity predominate over residues 464 to 478; sequence TESSGTSTPSNPGPH. The 332-residue stretch at 567 to 898 folds into the Malonyl-CoA:ACP transacylase (MAT) domain; it reads FVFTGQGAQW…YSALVRNKNA (332 aa). The tract at residues 965-1103 is N-terminal hotdog fold; sequence TDLLGVLERN…GLVSVVAPQK (139 aa). The region spanning 965 to 1293 is the PKS/mFAS DH domain; it reads TDLLGVLERN…CATLAREGAD (329 aa). Catalysis depends on His997, which acts as the Proton acceptor; for dehydratase activity. The tract at residues 1133–1293 is C-terminal hotdog fold; it reads RRNINVPQFY…CATLAREGAD (161 aa). The Proton donor; for dehydratase activity role is filled by Asp1198. A methyltransferase (CMeT) domain region spans residues 1343-1645; sequence LERAAYYMLK…IATSINSNNY (303 aa). In terms of domain architecture, Enoyl reductase (ER) spans 1866 to 2178; the sequence is GLLDSIFWTD…TGGHMGKLVG (313 aa). The region spanning 2202–2379 is the Ketoreductase (KR) domain; sequence ASYVLIGGLG…ATTIDLGAIS (178 aa). The Carrier domain occupies 2482 to 2559; it reads DASELILGAL…HLATKIAQRS (78 aa). Ser2519 carries the O-(pantetheine 4'-phosphoryl)serine modification.

Pantetheine 4'-phosphate is required as a cofactor.

Its pathway is secondary metabolite biosynthesis. Its function is as follows. Highly reducing polyketide synthase; part of the gene cluster that mediates the biosynthesis of the antihypercholesterolemic agents phomoidrides which are dimeric anhydrides. The pathway begins with the highly reducing polyketide synthase tstA that catalyzes the formation of a C12-fatty acyl-ACP, starting from one acetate and 5 malonate units. The hydrolase tstM is involved in the release of the C12-fatty acyl chain from tstA. The alkylcitrate synthase (ACS) tstJ and the alkylcitrate dehydratase (ACDH) tstI then give rise to decarboxylated monomeric anhydrides by coupling the C12-fatty acyl chain with oxalacetic acid. The cyclase tstC is responsible for the dimerization of the monomeric anhydrides which leads to the production of prephomoidride that contains the characteristic bicyclo[4.3.1]deca-1,6-diene system of phomoidrides. Iterative oxidation catalyzed by the alpha-ketoglutarate-dependent dioxygenase tstK produced then phomoidride A. Finally, the methyltransferase tstE converts phomoidride A to phomoidride B via an acetalization reaction. The phosphatidylethanolamine-binding protein tstB and tstN are not essential for dimerization and their functions have still to be determined. This chain is Highly reducing polyketide synthase tstA, found in Talaromyces stipitatus (strain ATCC 10500 / CBS 375.48 / QM 6759 / NRRL 1006) (Penicillium stipitatum).